A 156-amino-acid polypeptide reads, in one-letter code: ATP synthase subunit b (156 aa).

The chain crosses the membrane as a helical span at residues 7 to 27 (FFAQMVVFFILWWVVAKFIWP).

It belongs to the ATPase B chain family. In terms of assembly, F-type ATPases have 2 components, F(1) - the catalytic core - and F(0) - the membrane proton channel. F(1) has five subunits: alpha(3), beta(3), gamma(1), delta(1), epsilon(1). F(0) has three main subunits: a(1), b(2) and c(10-14). The alpha and beta chains form an alternating ring which encloses part of the gamma chain. F(1) is attached to F(0) by a central stalk formed by the gamma and epsilon chains, while a peripheral stalk is formed by the delta and b chains.

It localises to the cell inner membrane. F(1)F(0) ATP synthase produces ATP from ADP in the presence of a proton or sodium gradient. F-type ATPases consist of two structural domains, F(1) containing the extramembraneous catalytic core and F(0) containing the membrane proton channel, linked together by a central stalk and a peripheral stalk. During catalysis, ATP synthesis in the catalytic domain of F(1) is coupled via a rotary mechanism of the central stalk subunits to proton translocation. In terms of biological role, component of the F(0) channel, it forms part of the peripheral stalk, linking F(1) to F(0). The protein is ATP synthase subunit b of Cupriavidus taiwanensis (strain DSM 17343 / BCRC 17206 / CCUG 44338 / CIP 107171 / LMG 19424 / R1) (Ralstonia taiwanensis (strain LMG 19424)).